The chain runs to 122 residues: Urease subunit beta (122 aa).

Belongs to the urease beta subunit family. Heterotrimer of UreA (gamma), UreB (beta) and UreC (alpha) subunits. Three heterotrimers associate to form the active enzyme.

It localises to the cytoplasm. The enzyme catalyses urea + 2 H2O + H(+) = hydrogencarbonate + 2 NH4(+). Its pathway is nitrogen metabolism; urea degradation; CO(2) and NH(3) from urea (urease route): step 1/1. The sequence is that of Urease subunit beta from Flavobacterium johnsoniae (strain ATCC 17061 / DSM 2064 / JCM 8514 / BCRC 14874 / CCUG 350202 / NBRC 14942 / NCIMB 11054 / UW101) (Cytophaga johnsonae).